The sequence spans 754 residues: Endothelin-converting enzyme 1 (754 aa).

Residues 1 to 52 (MMSTYKRATLDEEDLVDSLSESDVYPNHLQVNFRGPRNGQRCWAARTPVEKR) are Cytoplasmic-facing. Thr-9 bears the Phosphothreonine mark. Residues 53–73 (LVVLVALLAAALVACLAVLGI) traverse the membrane as a helical; Signal-anchor for type II membrane protein segment. Residues 74-754 (QYQTRTPSVC…MNPHHKCEVW (681 aa)) lie on the Extracellular side of the membrane. Residues 82–754 (VCLSEACISV…MNPHHKCEVW (673 aa)) form the Peptidase M13 domain. Disulfide bonds link Cys-83-Cys-88, Cys-106-Cys-739, Cys-114-Cys-699, Cys-169-Cys-419, and Cys-628-Cys-751. N-linked (GlcNAc...) asparagine glycans are attached at residues Asn-150, Asn-171, Asn-194, Asn-254, Asn-300, Asn-346, Asn-367, and Asn-523. His-591 lines the Zn(2+) pocket. Glu-592 is an active-site residue. Zn(2+) is bound at residue His-595. N-linked (GlcNAc...) asparagine glycans are attached at residues Asn-616 and Asn-635. A Zn(2+)-binding site is contributed by Glu-651. Asp-655 (proton donor) is an active-site residue.

It belongs to the peptidase M13 family. In terms of assembly, homodimer; disulfide-linked. Interacts with PPP1R16B. Interacts with TSPAN8; this interaction recruits the endothelin converting enzyme ECE1 to tetraspanin-enriched microdomains and positively modulates its enzymatic activity. Zn(2+) is required as a cofactor.

Its subcellular location is the cell membrane. The enzyme catalyses Hydrolysis of the 21-Trp-|-Val-22 bond in big endothelin to form endothelin 1.. Its activity is regulated as follows. Inhibited by phosphoramidon. Functionally, converts big endothelin-1 to endothelin-1. This is Endothelin-converting enzyme 1 (ECE1) from Bos taurus (Bovine).